Here is a 692-residue protein sequence, read N- to C-terminus: Elongation factor G (692 aa).

In terms of domain architecture, tr-type G spans 8 to 283; sequence NRIRNIGIAA…AVIDYLPAPT (276 aa). Residues 17 to 24, 81 to 85, and 135 to 138 contribute to the GTP site; these read AHIDAGKT, DTPGH, and NKMD.

Belongs to the TRAFAC class translation factor GTPase superfamily. Classic translation factor GTPase family. EF-G/EF-2 subfamily.

It is found in the cytoplasm. Catalyzes the GTP-dependent ribosomal translocation step during translation elongation. During this step, the ribosome changes from the pre-translocational (PRE) to the post-translocational (POST) state as the newly formed A-site-bound peptidyl-tRNA and P-site-bound deacylated tRNA move to the P and E sites, respectively. Catalyzes the coordinated movement of the two tRNA molecules, the mRNA and conformational changes in the ribosome. In Helicobacter pylori (strain J99 / ATCC 700824) (Campylobacter pylori J99), this protein is Elongation factor G (fusA).